The primary structure comprises 301 residues: Cuticle collagen 2 (301 aa).

Positions 1–37 (MDIDARIKAYKFVAYSAVTFSVVAVVSVFITLPMVYN) are cleaved as a signal peptide. Triple-helical region stretches follow at residues 105 to 134 (GPPG…PGKG), 153 to 176 (GPPG…PGSP), 183 to 212 (GPAG…PGAS), and 215 to 282 (GGPG…KGIC). The disordered stretch occupies residues 109–284 (PGGSPGKPGK…GEGEKGICPK (176 aa)). 2 stretches are compositionally biased toward pro residues: residues 143–170 (TQPP…PGPD) and 179–191 (PSGP…PGPA). Residues 201–218 (GAPGGPGEPGASEQGGPG) show a composition bias toward gly residues. Residues 219–229 (EPGPAGPPGPA) show a composition bias toward pro residues. A compositionally biased stretch (low complexity) spans 252-261 (PGAAGAPGAD). The span at 262 to 274 (GNPGGPGTAGKPG) shows a compositional bias: gly residues.

The protein belongs to the cuticular collagen family. In terms of assembly, collagen polypeptide chains are complexed within the cuticle by disulfide bonds and other types of covalent cross-links. Syncytial dorsal and ventral epidermis.

Its function is as follows. Nematode cuticles are composed largely of collagen-like proteins. The cuticle functions both as an exoskeleton and as a barrier to protect the worm from its environment. The sequence is that of Cuticle collagen 2 (col-2) from Caenorhabditis elegans.